Here is a 288-residue protein sequence, read N- to C-terminus: Ankyrin repeat and SOCS box protein 8 (288 aa).

The residue at position 17 (Ser17) is a Phosphoserine. ANK repeat units follow at residues 52 to 81 (GTLKPLHCACMVSDADCVELLLEKGAEVNA), 85 to 113 (YNRTALHYAAERDEACVEVLLEYGANPNA), 117 to 146 (NRDTPLHWAAFKNNAECVRALLESGASVNA), and 150 to 179 (NNDTPLSWAAMKGNLESVSILLDYGAEVRV). One can recognise an SOCS box domain in the interval 235–288 (QLCEKLTVLCSAPGTLKTLARYAVRRSLGLQYLPDAVKGLPLPVSLKDYLLLLE).

The protein belongs to the ankyrin SOCS box (ASB) family. In terms of assembly, interacts with TBK1; this interaction promotes TBK1 proteasomal degradation. Phosphorylated by TBK1.

The protein resides in the cytoplasm. It participates in protein modification; protein ubiquitination. Its function is as follows. May be a substrate-recognition component of a SCF-like ECS (Elongin-Cullin-SOCS-box protein) E3 ubiquitin-protein ligase complex which mediates the ubiquitination and subsequent proteasomal degradation of target proteins. Inhibits IFN-beta production through the IRF3 signaling pathway by targeting TBK1 via 'Lys-48'-linked ubiquitination, leading to its proteasomal degradation. This Mus musculus (Mouse) protein is Ankyrin repeat and SOCS box protein 8 (Asb8).